Reading from the N-terminus, the 499-residue chain is MIVEMSQISKSFSGNQVLKNVSFTLEKGEIHALMGENGAGKSTLMKILTGIYPRDEGVVRVKGKEVAYTHPKDAEKDGIAVIHQELNILPELSVAENLFLGNEYTVGKTGWLKTKKMNEYAEQQLAELGLKVKASDRAGALSVGKQQLIEIAKALMTNADIIIMDEPTAALTDREIDTLFTVIRGLQEKGVTFVYISHRMEEIFSLCQRITVLRDGNYVSTKVIAETSFDEIVKLMVGRELGGRYPDHDLEPGAVKLAVKNVSRKNEFESVTFEVREGEIFGIAGLMGAGRSEVVESIFGYRHLHSGTIEIDQKPVVFKRPVDAIENGIAFVPEDRKTKGLIVNFSVRDNLSITNLATVSSGNMMSSTKEQALYQELVKKLGVRTSGPHQKAKSLSGGNQQKVVIAKWLGMKPKVLILDEPTRGVDVGAKKEIYTIMNELAKQGVAIIMVSSELPEIIGMSTRVAVMFEGKLMKVLDRNELSEETIMHYATGGDKHVHQ.

ABC transporter domains follow at residues 3–240 (VEMS…VGRE) and 250–494 (LEPG…TGGD). An ATP-binding site is contributed by 35 to 42 (GENGAGKS).

The protein belongs to the ABC transporter superfamily. Ribose importer (TC 3.A.1.2.1) family. The complex is composed of an ATP-binding protein (RbsA), two transmembrane proteins (RbsC) and a solute-binding protein (RbsB).

It localises to the cell membrane. The catalysed reaction is D-ribose(out) + ATP + H2O = D-ribose(in) + ADP + phosphate + H(+). Functionally, part of the ABC transporter complex RbsABC involved in ribose import. Responsible for energy coupling to the transport system. The protein is Ribose import ATP-binding protein RbsA of Shouchella clausii (strain KSM-K16) (Alkalihalobacillus clausii).